Consider the following 223-residue polypeptide: Small ribosomal subunit protein uS3 (223 aa).

Residues 39 to 107 (VREFLHKKLA…PVQINIEEVR (69 aa)) enclose the KH type-2 domain.

Belongs to the universal ribosomal protein uS3 family. In terms of assembly, part of the 30S ribosomal subunit. Forms a tight complex with proteins S10 and S14.

In terms of biological role, binds the lower part of the 30S subunit head. Binds mRNA in the 70S ribosome, positioning it for translation. The sequence is that of Small ribosomal subunit protein uS3 from Francisella tularensis subsp. novicida (strain U112).